The following is a 366-amino-acid chain: 3-dehydroquinate synthase (366 aa).

Residues 71–76 (DGEQYK), 105–109 (GVIGD), 129–130 (TT), Lys-142, Lys-151, and 169–172 (CLQT) each bind NAD(+). Zn(2+) is bound by residues Glu-184, His-248, and His-265.

The protein belongs to the sugar phosphate cyclases superfamily. Dehydroquinate synthase family. Requires NAD(+) as cofactor. Co(2+) is required as a cofactor. It depends on Zn(2+) as a cofactor.

It is found in the cytoplasm. The enzyme catalyses 7-phospho-2-dehydro-3-deoxy-D-arabino-heptonate = 3-dehydroquinate + phosphate. It participates in metabolic intermediate biosynthesis; chorismate biosynthesis; chorismate from D-erythrose 4-phosphate and phosphoenolpyruvate: step 2/7. In terms of biological role, catalyzes the conversion of 3-deoxy-D-arabino-heptulosonate 7-phosphate (DAHP) to dehydroquinate (DHQ). The chain is 3-dehydroquinate synthase from Photorhabdus laumondii subsp. laumondii (strain DSM 15139 / CIP 105565 / TT01) (Photorhabdus luminescens subsp. laumondii).